The following is a 587-amino-acid chain: F-box/WD repeat-containing protein sel-10 (587 aa).

Over residues 1 to 11 the composition is skewed to basic and acidic residues; that stretch reads MWPRNDVHMDD. The disordered stretch occupies residues 1–53; sequence MWPRNDVHMDDGSMTPEDQEPVTDNDMEYNDNGEESSYSNGSSSSYNADKLSS. Positions 17–34 are enriched in acidic residues; the sequence is EDQEPVTDNDMEYNDNGE. Residues 35-47 show a composition bias toward low complexity; sequence ESSYSNGSSSSYN. The F-box domain occupies 121 to 167; it reads RDFLSCLPVELGMKILHNLTGYDLLKVAQVSKNWKLISEIDKIWKSL. WD repeat units follow at residues 253–291, 294–333, 336–373, 376–415, 416–455, 461–498, and 501–539; these read GHEDHVITCMQIHDDVLVTGSDDNTLKVWCIDKGEVMYT, GHTGGVWTSQISQCGRYIVSGSTDRTVKVWSTVDGSLLHT, GHTSTVRCMAMAGSILVTGSRDTTLRVWDVESGRHLAT, GHHAAVRCVQFDGTTVVSGGYDFTVKIWNAHTGRCIRTLT, GHNNRVYSLLFESERSIVCSGSLDTSIRVWDFTRPEGQEC, GHTSLTSGMQLRGNILVSCNADSHVRVWDIHEGTCVHM, and GHRSAITSLQWFGRNMVATSSDDGTVKLWDIERGALIRD.

Probable component of the SCF(sel-10) E3 ubiquitin-protein ligase complex which includes skr-1 and F-box domain-containing protein sel-10 as a substrate recognition component. Interacts with fem-1, fem-2, and fem-3. Interacts with the intracellular domain of glp-1 and sel-12. Interacts with lin-12. Interacts with skr-1. Interacts with zyg-1. As to expression, expressed in tail and head neurons.

It is found in the cell projection. The protein resides in the axon. It localises to the cytoplasm. In terms of biological role, probable substrate recognition component of SCF (SKP1-CUL-F-box protein) E3 ubiquitin-protein ligase complex, which mediates the ubiquitination and subsequent proteasomal degradation of target proteins. Regulates synapse elimination in early development in the motor neuron HSNL. Cell autonomous negative regulator of lin-12/Notch-mediated signaling, with respect to lin-12 activity in cell fate decisions and tumorigenesis. May target the intracellular domains of lin-12/Notch proteins for ubiquitin-dependent degradation. Involved in sex determination by promoting female development. Potential regulator of presenilin. May have a role in egg laying. Regulates zyg-1 levels (possibly redundantly with lin-23) to control centrosome duplication during mitosis. Negatively regulates lin-45 activity and protein stability, probably by targeting it for ubiquitination and proteasomal degradation. The sequence is that of F-box/WD repeat-containing protein sel-10 from Caenorhabditis elegans.